The chain runs to 310 residues: MKVFAGNSNRLLAEAICNYLNLPLGKATVRRFADQEIFVEIGENVRGEDVFIVQSTSFPTNDHLMELLIMIDAVRRSSARRITAVLPYFGYARQDRKPGPRTPISAKLVANLITEAGADRVLTLDLHAGQIQGFFDIPTDNLYAIPILARDVKENYNLKNVMVVSPDVGGVVRARALAKRLDCLLAIVDKRRDRPGESEVMNVIGEVNGKDCLLIDDIVDSGGTLCNAAEALLKNGATSVTAYITHGVLSGGAVARVTSSMLKELVITDSIQPTTAVQSAHNIRVISTAALLGEAISRTSQEESVSSLFD.

Residues Asp34–Glu36 and Arg93–Gln94 each bind ATP. Mg(2+) contacts are provided by His127 and Asp167. Residue Lys190 is part of the active site. D-ribose 5-phosphate is bound by residues Arg192, Asp216, and Asp220–Thr224.

This sequence belongs to the ribose-phosphate pyrophosphokinase family. Class I subfamily. As to quaternary structure, homohexamer. Requires Mg(2+) as cofactor.

It localises to the cytoplasm. The enzyme catalyses D-ribose 5-phosphate + ATP = 5-phospho-alpha-D-ribose 1-diphosphate + AMP + H(+). It functions in the pathway metabolic intermediate biosynthesis; 5-phospho-alpha-D-ribose 1-diphosphate biosynthesis; 5-phospho-alpha-D-ribose 1-diphosphate from D-ribose 5-phosphate (route I): step 1/1. Its function is as follows. Involved in the biosynthesis of the central metabolite phospho-alpha-D-ribosyl-1-pyrophosphate (PRPP) via the transfer of pyrophosphoryl group from ATP to 1-hydroxyl of ribose-5-phosphate (Rib-5-P). This is Ribose-phosphate pyrophosphokinase from Rhizobium meliloti (strain 1021) (Ensifer meliloti).